Consider the following 328-residue polypeptide: tRNA uridine(34) hydroxylase (328 aa).

In terms of domain architecture, Rhodanese spans L130–E224. The active-site Cysteine persulfide intermediate is C184.

This sequence belongs to the TrhO family.

It carries out the reaction uridine(34) in tRNA + AH2 + O2 = 5-hydroxyuridine(34) in tRNA + A + H2O. Its function is as follows. Catalyzes oxygen-dependent 5-hydroxyuridine (ho5U) modification at position 34 in tRNAs. The polypeptide is tRNA uridine(34) hydroxylase (Streptococcus pneumoniae (strain ATCC 700669 / Spain 23F-1)).